Reading from the N-terminus, the 204-residue chain is Small ribosomal subunit protein uS4 (204 aa).

The disordered stretch occupies residues 20-46; it reads WGRPKSPINKREYGPGEHGQRRRKPSD. Over residues 28-38 the composition is skewed to basic and acidic residues; sequence NKREYGPGEHG. The S4 RNA-binding domain occupies 93–156; it reads TRLDAVVYRM…RQMPLILEAL (64 aa).

This sequence belongs to the universal ribosomal protein uS4 family. Part of the 30S ribosomal subunit. Contacts protein S5. The interaction surface between S4 and S5 is involved in control of translational fidelity.

Functionally, one of the primary rRNA binding proteins, it binds directly to 16S rRNA where it nucleates assembly of the body of the 30S subunit. Its function is as follows. With S5 and S12 plays an important role in translational accuracy. The chain is Small ribosomal subunit protein uS4 from Rhodospirillum rubrum (strain ATCC 11170 / ATH 1.1.1 / DSM 467 / LMG 4362 / NCIMB 8255 / S1).